A 198-amino-acid polypeptide reads, in one-letter code: Recombination protein RecR (198 aa).

The C4-type zinc finger occupies 57 to 72 (CSICGRLTDDDPCSIC). The Toprim domain maps to 80 to 175 (TTILVLEDSR…KVTRLARGLA (96 aa)).

Belongs to the RecR family.

In terms of biological role, may play a role in DNA repair. It seems to be involved in an RecBC-independent recombinational process of DNA repair. It may act with RecF and RecO. The protein is Recombination protein RecR of Streptococcus pneumoniae serotype 2 (strain D39 / NCTC 7466).